The following is an 89-amino-acid chain: Bombyxin A-2 (89 aa).

The N-terminal stretch at 1–19 (MKILLAIALMLSTVMWVST) is a signal peptide. Gln-20 is subject to Pyrrolidone carboxylic acid. Cystine bridges form between Cys-29–Cys-76, Cys-41–Cys-89, and Cys-75–Cys-80. Residues 50-68 (SDAQFASYGSAWLMPYSAG) constitute a propeptide, c peptide like.

The protein belongs to the insulin family. In terms of assembly, heterodimer of a B chain and an A chain linked by two disulfide bonds.

Its subcellular location is the secreted. Its function is as follows. Brain peptide responsible for activation of prothoracic glands to produce ecdysone in insects. This is Bombyxin A-2 (BBXA2) from Bombyx mori (Silk moth).